The primary structure comprises 466 residues: tRNA-2-methylthio-N(6)-dimethylallyladenosine synthase (466 aa).

The MTTase N-terminal domain maps to Arg-22–Tyr-139. Positions 31, 67, 101, 166, 170, and 173 each coordinate [4Fe-4S] cluster. A Radical SAM core domain is found at Ser-152–Glu-386. The 61-residue stretch at Ala-389–Leu-449 folds into the TRAM domain.

Belongs to the methylthiotransferase family. MiaB subfamily. Monomer. [4Fe-4S] cluster is required as a cofactor.

It localises to the cytoplasm. It carries out the reaction N(6)-dimethylallyladenosine(37) in tRNA + (sulfur carrier)-SH + AH2 + 2 S-adenosyl-L-methionine = 2-methylsulfanyl-N(6)-dimethylallyladenosine(37) in tRNA + (sulfur carrier)-H + 5'-deoxyadenosine + L-methionine + A + S-adenosyl-L-homocysteine + 2 H(+). Its function is as follows. Catalyzes the methylthiolation of N6-(dimethylallyl)adenosine (i(6)A), leading to the formation of 2-methylthio-N6-(dimethylallyl)adenosine (ms(2)i(6)A) at position 37 in tRNAs that read codons beginning with uridine. The sequence is that of tRNA-2-methylthio-N(6)-dimethylallyladenosine synthase from Chloroflexus aurantiacus (strain ATCC 29366 / DSM 635 / J-10-fl).